The following is a 404-amino-acid chain: UPF0674 endoplasmic reticulum membrane protein YNR021W (404 aa).

Ser2 is modified (N-acetylserine). Asn44 carries an N-linked (GlcNAc...) asparagine glycan. The helical transmembrane segment at 49–68 (LCALGVLFLVYAFYKFGNSV) threads the bilayer. The N-linked (GlcNAc...) asparagine glycan is linked to Asn98. Residues 369–404 (AKRRQLKASGQQEKVDQKMKEKRERRLKNKQRTRFQ) are disordered. Positions 381 to 392 (EKVDQKMKEKRE) are enriched in basic and acidic residues. Positions 393–404 (RRLKNKQRTRFQ) are enriched in basic residues.

Belongs to the UPF0674 family.

It localises to the endoplasmic reticulum membrane. This chain is UPF0674 endoplasmic reticulum membrane protein YNR021W, found in Saccharomyces cerevisiae (strain ATCC 204508 / S288c) (Baker's yeast).